We begin with the raw amino-acid sequence, 206 residues long: Protein phosphatase inhibitor 2 (206 aa).

Residues 1 to 36 (MAASTASHRPIKGILKNKTSAASPPVVPSAEQPRPI) are disordered. Position 2 is an N-acetylalanine (alanine 2). The tract at residues 12–17 (KGILKN) is required for binding PPP1CC. Residues 44–56 (KSQKWDEMNILAT) are required for binding the 'RVXF' binding groove of PPP1CC. Serine 45 bears the Phosphoserine; by ATM mark. Threonine 74 is modified (phosphothreonine). The disordered stretch occupies residues 75–143 (PYHNMIGDDE…EREKKRQFEM (69 aa)). Acidic residues predominate over residues 81 to 92 (GDDEDAYSDSEG). Phosphoserine occurs at positions 88 and 90. Phosphothreonine is present on residues threonine 97 and threonine 117. Basic and acidic residues predominate over residues 111 to 121 (SEPKYRTREQE). Residues serine 122, serine 123, and serine 131 each carry the phosphoserine modification. Residues 122–131 (SSGEEDNDLS) are compositionally biased toward acidic residues. Residues 132–143 (PEEREKKRQFEM) are compositionally biased toward basic and acidic residues. The required for binding PPP1CC catalytic center, displacing metal ions and inhibition of PPP1CC catalytic activity stretch occupies residues 148–151 (HYNE). The tract at residues 164–206 (KDLHDDDEDEEMAETADGDSMNVEESSQGSTTSDHLQHKSQSS) is disordered. Residues 168–180 (DDDEDEEMAETAD) show a composition bias toward acidic residues. Positions 186 to 206 (VEESSQGSTTSDHLQHKSQSS) are enriched in polar residues.

The protein belongs to the protein phosphatase inhibitor 2 family. As to quaternary structure, heterodimer with PP1. In terms of processing, phosphorylation on Ser-45 by ATM activates PP1 by dissociating the PP1-PPP1R2 complex. Phosphorylation on Thr-74 by GSK3 activates PP1 by dissociating the PP1-PPP1R2 complex.

Its function is as follows. Inhibitor of protein-phosphatase 1. The chain is Protein phosphatase inhibitor 2 (Ppp1r2) from Mus musculus (Mouse).